We begin with the raw amino-acid sequence, 503 residues long: MNKDILLIVDSMSNERGVSKEVIFEAIEAALAAVTAKRYEEDDVKIRVAIDQKTGDYESFRCWTVVEDTNESLEFPNQEMTLKQAREIDSDLEVGDVIEEPVESVKFGRIAVQQAKQVIVQKVREAERAKIIRQYEKRVGELVIGVVKRVTRESIILDMGENAEALLLREEMIPREAFRINDRLRAYLYSVCQDKKRGPQLLVSRTRPEFLVELFKIEVPEIGEEVIEIKGAARDPGSRAKIAVKTNDGRIDPIGACVGMRGSRVQAVSNELGGERIDIVLWDDNPAQLVINAMAPAEVASIVVDEDSHTMDIAVNKDQLSQAIGRSGQNVRLASELTGWTLNVMSEAEMAQKHEKEAGKIKTAFMEKLDVDEEVADALVQAGFMNLEEVAYVPKEELQGVEGFDEDISAELQRRAGDVLLTQEIAKQELDEKKPAEDLLTLPGMTTELARQLVENEVLTRDDLAEKSVLDLKEIIEIDDEAAANLIMAARAHWFAEEESEKS.

An S1 motif domain is found at 140–206; it reads GELVIGVVKR…RGPQLLVSRT (67 aa). In terms of domain architecture, KH spans 308 to 374; sequence SHTMDIAVNK…FMEKLDVDEE (67 aa).

This sequence belongs to the NusA family. As to quaternary structure, monomer. Binds directly to the core enzyme of the DNA-dependent RNA polymerase and to nascent RNA.

The protein resides in the cytoplasm. Participates in both transcription termination and antitermination. The chain is Transcription termination/antitermination protein NusA from Coxiella burnetii (strain RSA 493 / Nine Mile phase I).